The following is a 179-amino-acid chain: Orotate phosphoribosyltransferase (179 aa).

Residues Arg94, Lys95, Lys98, His100, and 120–128 each bind 5-phospho-alpha-D-ribose 1-diphosphate; that span reads EDTSTTGNS. Orotate is bound by residues Thr124 and Arg152.

This sequence belongs to the purine/pyrimidine phosphoribosyltransferase family. PyrE subfamily. Homodimer. The cofactor is Mg(2+).

The catalysed reaction is orotidine 5'-phosphate + diphosphate = orotate + 5-phospho-alpha-D-ribose 1-diphosphate. The protein operates within pyrimidine metabolism; UMP biosynthesis via de novo pathway; UMP from orotate: step 1/2. In terms of biological role, catalyzes the transfer of a ribosyl phosphate group from 5-phosphoribose 1-diphosphate to orotate, leading to the formation of orotidine monophosphate (OMP). In Mycobacterium bovis (strain ATCC BAA-935 / AF2122/97), this protein is Orotate phosphoribosyltransferase.